The primary structure comprises 92 residues: Small ribosomal subunit protein uS17 (92 aa).

It belongs to the universal ribosomal protein uS17 family. In terms of assembly, part of the 30S ribosomal subunit.

In terms of biological role, one of the primary rRNA binding proteins, it binds specifically to the 5'-end of 16S ribosomal RNA. This Corynebacterium glutamicum (strain ATCC 13032 / DSM 20300 / JCM 1318 / BCRC 11384 / CCUG 27702 / LMG 3730 / NBRC 12168 / NCIMB 10025 / NRRL B-2784 / 534) protein is Small ribosomal subunit protein uS17.